The sequence spans 490 residues: MGSDLLWLILAIVVGTYVVLFGFLRRANEWYYSMKLGDKSRYLPPGDMGWPIIGNMIPYFKGFRSGEPESFIFDLFEKYGRKGIYRNHIFGSPSIIVLAPEACRQVFLDDDNFKMGYPESTNKLTFRGSFNTASKEGQRRIRKLATSPIRGHKAIAIYIDNIEDIVVKSMNEWASKDKPIEFLSEMRKATFKVIANIFLGSSSESVIGSVEQYYVDYANGLISPLAINLPGFAFHKAMKARDMLGEILEPILRERRSMKEKDQLKGKRGLVDLLMEVEDENGEKLEDVDIVDMLIAFLSAGHESSAHIATWAIIHLHRHPEMLQKARKEQEEIVKKRPASQQGFSIEDFKQMEYIAQVIDETLRITNLSSSSFREAEADVNLQGYIIPKGWKVLLYNRGVHRNPENYPNPKEFDPSRWDNRANRPGYFIPFGGGPRICPGADLAKLEMSIFIHYFLLNYRLEPLNPECPTEYLPVPRPSDQCLARIVKLK.

A helical transmembrane segment spans residues 4 to 24 (DLLWLILAIVVGTYVVLFGFL). Residue cysteine 438 coordinates heme.

This sequence belongs to the cytochrome P450 family. The cofactor is heme. Mainly expressed in petioles and, to a lower extent, in roots.

The protein localises to the membrane. The enzyme catalyses (21S)-21-acetoxyl-apo-melianone + reduced [NADPH--hemoprotein reductase] + O2 = (21S)-21-acetyl-1-hydroxy-apo-melianone + oxidized [NADPH--hemoprotein reductase] + H2O + H(+). It functions in the pathway secondary metabolite biosynthesis; terpenoid biosynthesis. Functionally, monooxygenase involved in the biosynthesis of limonoids triterpene natural products such as azadirachtin, an antifeedant widely used as bioinsecticide, and possessing many medicinal applications including anti-tumoral, anti-malarial, anti-rheumatic, antibacterial, anti-inflammatory, anti-pyretic and diuretic effects. Catalyzes the conversion of (21S)-21-acetoxyl-apo-melianone to (21S)-21-acetyl-1-hydroxy-apo-melianone. The sequence is that of (21S)-21-acetyl-1-hydroxy-apo-melianone synthase CYP88A164 from Melia azedarach (Chinaberry tree).